The chain runs to 498 residues: COP9 signalosome complex subunit 1 (498 aa).

One can recognise a PCI domain in the interval 249 to 430; sequence SYLEAANSFI…HVLVSTQGDK (182 aa).

This sequence belongs to the CSN1 family. In terms of assembly, component of the COP9 signalosome (CSN) complex.

It localises to the cytoplasm. The protein resides in the nucleus. In terms of biological role, component of the COP9 signalosome (CSN) complex that acts as an regulator of the ubiquitin (Ubl) conjugation pathway by mediating the deneddylation of the cullin subunit of SCF-type E3 ubiquitin-protein ligase complexes. The CSN complex seems to link protein degradation to sexual development. Required for fruit body formation. The chain is COP9 signalosome complex subunit 1 (csnA) from Emericella nidulans (strain FGSC A4 / ATCC 38163 / CBS 112.46 / NRRL 194 / M139) (Aspergillus nidulans).